Here is a 174-residue protein sequence, read N- to C-terminus: Gamma-crystallin D (174 aa).

2 Beta/gamma crystallin 'Greek key' domains span residues 2–40 (GKITFYEDRGFQGRHYECSTDHSNLQPYFSRCNSVRVDS) and 41–83 (GCWM…RLIP). Residues 84 to 87 (HAGS) form a connecting peptide region. Beta/gamma crystallin 'Greek key' domains follow at residues 88-128 (HRIR…NVLE) and 129-171 (GCWV…RRVM).

This sequence belongs to the beta/gamma-crystallin family. Detected in the superior olivary complex and fibers of the ventral aoustic stria of the auditory hindbrain.

Crystallins are the dominant structural components of the vertebrate eye lens. The sequence is that of Gamma-crystallin D (Crygd) from Rattus norvegicus (Rat).